Reading from the N-terminus, the 344-residue chain is MATFVSNWSTKSVSESFIAPLQKRAEKDVPVGNDVPIIDLQQHHHLLVQQITKACQDFGLFQVINHGFPEELMLETMEVCKEFFALPAEEKEKFKPKGEAAKFELPLEQKAKLYVEGEQLSNEEFLYWKDTLAHGCHPLDQDLVNSWPEKPAKYREVVAKYSVEVRKLTMRMLDYICEGLGLKLGYFDNELSQIQMMLTNYYPPCPDPSSTLGSGGHYDGNLITLLQQDLPGLQQLIVKDATWIAVQPIPTAFVVNLGLTLKVITNEKFEGSIHRVVTDPTRDRVSIATLIGPDYSCTIEPAKELLNQDNPPLYKPYSYSEFADIYLSDKSDYDSGVKPYKINV.

One can recognise a Fe2OG dioxygenase domain in the interval 193-293 (QIQMMLTNYY…RVSIATLIGP (101 aa)). Positions 217, 219, and 274 each coordinate Fe cation. Residue Arg-284 coordinates 2-oxoglutarate.

It belongs to the iron/ascorbate-dependent oxidoreductase family. Monomer. Fe(2+) is required as a cofactor. It depends on L-ascorbate as a cofactor. In terms of processing, the N-terminus is blocked. As to expression, root.

It catalyses the reaction L-hyoscyamine + 2-oxoglutarate + O2 = (6S)-6-hydroxyhyoscyamine + succinate + CO2. It participates in alkaloid biosynthesis; scopolamine biosynthesis. The protein is Hyoscyamine 6-dioxygenase (H6H) of Hyoscyamus niger (Black henbane).